Here is a 362-residue protein sequence, read N- to C-terminus: Phosphoserine aminotransferase (362 aa).

Serine 9 and arginine 42 together coordinate L-glutamate. Residues 76 to 77 (GR), tryptophan 102, threonine 153, aspartate 174, and glutamine 197 contribute to the pyridoxal 5'-phosphate site. N6-(pyridoxal phosphate)lysine is present on lysine 198. 239–240 (NT) contributes to the pyridoxal 5'-phosphate binding site.

This sequence belongs to the class-V pyridoxal-phosphate-dependent aminotransferase family. SerC subfamily. In terms of assembly, homodimer. Requires pyridoxal 5'-phosphate as cofactor.

It localises to the cytoplasm. It carries out the reaction O-phospho-L-serine + 2-oxoglutarate = 3-phosphooxypyruvate + L-glutamate. The enzyme catalyses 4-(phosphooxy)-L-threonine + 2-oxoglutarate = (R)-3-hydroxy-2-oxo-4-phosphooxybutanoate + L-glutamate. It functions in the pathway amino-acid biosynthesis; L-serine biosynthesis; L-serine from 3-phospho-D-glycerate: step 2/3. The protein operates within cofactor biosynthesis; pyridoxine 5'-phosphate biosynthesis; pyridoxine 5'-phosphate from D-erythrose 4-phosphate: step 3/5. Catalyzes the reversible conversion of 3-phosphohydroxypyruvate to phosphoserine and of 3-hydroxy-2-oxo-4-phosphonooxybutanoate to phosphohydroxythreonine. In Enterobacter sp. (strain 638), this protein is Phosphoserine aminotransferase.